A 409-amino-acid chain; its full sequence is ATPase ASNA1 homolog (409 aa).

21 to 28 (KGGVGKTT) is a binding site for ATP. Residue Asp62 is part of the active site. ATP contacts are provided by Glu303 and Asn330. Residues Cys342 and Cys345 each contribute to the Zn(2+) site.

It belongs to the arsA ATPase family. In terms of assembly, homodimer.

Its subcellular location is the cytoplasm. The protein localises to the endoplasmic reticulum. Functionally, ATPase required for the post-translational delivery of tail-anchored (TA) proteins to the endoplasmic reticulum. Recognizes and selectively binds the transmembrane domain of TA proteins in the cytosol. This complex then targets to the endoplasmic reticulum by membrane-bound receptors, where the tail-anchored protein is released for insertion. This process is regulated by ATP binding and hydrolysis. ATP binding drives the homodimer towards the closed dimer state, facilitating recognition of newly synthesized TA membrane proteins. ATP hydrolysis is required for insertion. Subsequently, the homodimer reverts towards the open dimer state, lowering its affinity for the membrane-bound receptor, and returning it to the cytosol to initiate a new round of targeting. The chain is ATPase ASNA1 homolog from Leishmania infantum.